The chain runs to 513 residues: ATP synthase subunit alpha (513 aa).

Residue 169-176 (GDRQTGKT) participates in ATP binding.

Belongs to the ATPase alpha/beta chains family. As to quaternary structure, F-type ATPases have 2 components, CF(1) - the catalytic core - and CF(0) - the membrane proton channel. CF(1) has five subunits: alpha(3), beta(3), gamma(1), delta(1), epsilon(1). CF(0) has three main subunits: a(1), b(2) and c(9-12). The alpha and beta chains form an alternating ring which encloses part of the gamma chain. CF(1) is attached to CF(0) by a central stalk formed by the gamma and epsilon chains, while a peripheral stalk is formed by the delta and b chains.

The protein localises to the cell inner membrane. The enzyme catalyses ATP + H2O + 4 H(+)(in) = ADP + phosphate + 5 H(+)(out). Its function is as follows. Produces ATP from ADP in the presence of a proton gradient across the membrane. The alpha chain is a regulatory subunit. The sequence is that of ATP synthase subunit alpha from Vesicomyosocius okutanii subsp. Calyptogena okutanii (strain HA).